The sequence spans 585 residues: MRKTKIVCTIGPASESEEMIEKLINAGMNVARLNFSHGSHEEHKGRIDTIRKVAKRLDKIVAILLDTKGPEIRTHNMKDGIIELERGNEVIVSMNEVEGTPEKFSVTYENLINDVQVGSYILLDDGLIELQVKDIDHAKKEVKCDILNSGELKNKKGVNLPGVRVSLPGITEKDAEDIRFGIKENVDFIAASFVRRPSDVLEIREILEEQKANISVFPKIENQEGIDNIAEILEVSDGLMVARGDMGVEIPPEKVPMVQKDLIRQCNKLGKPVITATQMLDSMQRNPRATRAEASDVANAIYDGTDAVMLSGETAAGLYPEEAVKTMRNIAVSAEAAQDYKKLLSDRTKLVETSLVNAIGISVAHTALNLNVKAIVAATESGSTARTISKYRPHSDIIAVTPSEETARQCSIVWGVQPVVKKGRKSTDALLNNAVATAVETGRVTNGDLIIITAGVPTGETGTTNMMKIHLVGDEIANGQGIGRGSVVGTTLVAETVKDLEGKDLSDKVIVTNSIDETFVPYVEKALGLITEENGITSPSAIVGLEKGIPTVVGVEKAVKNISNNMLVTIDAAQGKIFEGYANVL.

Position 32 (arginine 32) interacts with substrate. K(+)-binding residues include asparagine 34, serine 36, aspartate 66, and threonine 67. 34–37 (NFSH) contacts ATP. Arginine 73 and lysine 156 together coordinate ATP. Glutamate 221 lines the Mg(2+) pocket. Residues glycine 244, aspartate 245, and threonine 277 each coordinate substrate. Aspartate 245 lines the Mg(2+) pocket.

Belongs to the pyruvate kinase family. It in the C-terminal section; belongs to the PEP-utilizing enzyme family. Requires Mg(2+) as cofactor. It depends on K(+) as a cofactor.

It carries out the reaction pyruvate + ATP = phosphoenolpyruvate + ADP + H(+). It participates in carbohydrate degradation; glycolysis; pyruvate from D-glyceraldehyde 3-phosphate: step 5/5. The sequence is that of Pyruvate kinase (pyk) from Staphylococcus aureus (strain bovine RF122 / ET3-1).